The following is a 250-amino-acid chain: MFLKSELLECNGSSVTLFQLSALQRIEHLEYLKQLEAVEVGDFQAAITFTVKSGAYLVAMSLWHGHPLKGSQGENAAAEVAKIQDEVMQTWPTELVAEAEYKVKLLSGMIAPVIDEPTSSGEERNEPAEPVTAGKALASELKFAMKLAREFGRPDWRAMLAGMSSTEYGDWKIFYQDNYFHDAQLDAHFSGLLYTISTLFFADPELTPDSFSILSPAPEAIDIDDPDDDTLMAKAAGISGGVRYGPDGSR.

This sequence belongs to the lambda-like tail assembly protein family. In terms of assembly, interacts (via C-terminus) with tail tube protein. Interacts (via N-terminus) with the tail assembly protein G and the tape measure protein.

Its subcellular location is the host cytoplasm. In terms of biological role, promotes tail assembly by creating a scaffold for the tail tube proteins. Tail assembly proteins G and GT probably wrap the linear tape measure protein to create a tail assembly scaffold. This allows the polymerization of the tail tube protein, during which G and GT are released, therefore they are absent in the mature virion. The tail assembly protein GT is produced by a rare -1 ribosomal frameshift. The ratio of translated G/GT is about 20, and this ratio is important for proper tail assembly. The polypeptide is Tail assembly protein GT (Escherichia coli (Bacteriophage N15)).